A 2035-amino-acid polypeptide reads, in one-letter code: Ral GTPase-activating protein subunit alpha-1 (2035 aa).

2 disordered regions span residues 343–384 (LVSR…SSLC) and 477–496 (DGEKREEENGTSTSEHVRNS). A compositionally biased stretch (basic and acidic residues) spans 345 to 365 (SREESKNDTVDKVDKSAEPEQ). Composition is skewed to polar residues over residues 366-384 (SHSNTSTLTEREPSSSSLC) and 486-496 (GTSTSEHVRNS). A phosphoserine mark is found at Ser-710 and Ser-720. The interval 714-752 (SFSRGWSRDQPGQAPMRQRSATTTGSPGTEKARSIVRQK) is disordered. Thr-753 bears the Phosphothreonine mark. Ser-772 carries the phosphoserine modification. Thr-777 is subject to Phosphothreonine. Residue Ser-796 is modified to Phosphoserine. Residues 807–817 (ERAKVNKEDTS) are compositionally biased toward basic and acidic residues. Disordered stretches follow at residues 807–834 (ERAKVNKEDTSPKLPPLNSETGGNSANV) and 848–911 (SGNA…SHSD). Polar residues-rich tracts occupy residues 824-833 (NSETGGNSAN) and 849-862 (GNASTMTRRGSSPG). Ser-859, Ser-860, and Ser-863 each carry phosphoserine. A compositionally biased stretch (low complexity) spans 894-911 (SPASAGSSDLMSSDSHSD). A phosphoserine mark is found at Ser-985, Ser-989, Ser-993, and Ser-999. Positions 986-1008 (ESASPVHSALGSRSQTPSPSTLS) are enriched in polar residues. A disordered region spans residues 986 to 1011 (ESASPVHSALGSRSQTPSPSTLSRAH). The residue at position 1001 (Thr-1001) is a Phosphothreonine. Phosphoserine is present on residues Ser-1003 and Ser-1477. Residues 1326–2035 (FTNKTVAHVA…YHHFPADADH (710 aa)) form a minimal domain that binds to TCF3/E12 region. A coiled-coil region spans residues 1713-1748 (SEKQENDVINAILKQYTEEKEFVEKHFNDLNMKASE). The Rap-GAP domain maps to 1795 to 2003 (LRNLDSRQCR…EERARYLQTI (209 aa)).

As to quaternary structure, component of the heterodimeric RalGAP1 complex with RALGAPB. Heterodimerization is required for activity. Interacts with the HLH region of TCF3/isoform E12. Expressed during embryogenesis. Expressed in the adult brain, particularly in neurons of the cortex and hippocampus.

It localises to the cytoplasm. Its subcellular location is the nucleus. Its function is as follows. Catalytic subunit of the heterodimeric RalGAP1 complex which acts as a GTPase activator for the Ras-like small GTPases RALA and RALB. May interact with the HLH region of TCF3/isoform E12. The sequence is that of Ral GTPase-activating protein subunit alpha-1 (Ralgapa1) from Mus musculus (Mouse).